A 333-amino-acid polypeptide reads, in one-letter code: uncharacterized protein (333 aa).

Residues 94–122 (NLYREVWRELEEEQNKVEKLREYILKLDS) adopt a coiled-coil conformation.

This is an uncharacterized protein from Aquifex aeolicus (strain VF5).